Here is a 629-residue protein sequence, read N- to C-terminus: tRNA uridine 5-carboxymethylaminomethyl modification enzyme MnmG (629 aa).

Residues 13–18 (GGGHAG), Val-125, and Ser-180 each bind FAD. 273–287 (GPRYCPSIEDKVMRF) contacts NAD(+). Gln-370 is an FAD binding site.

Belongs to the MnmG family. In terms of assembly, homodimer. Heterotetramer of two MnmE and two MnmG subunits. FAD serves as cofactor.

Its subcellular location is the cytoplasm. Functionally, NAD-binding protein involved in the addition of a carboxymethylaminomethyl (cmnm) group at the wobble position (U34) of certain tRNAs, forming tRNA-cmnm(5)s(2)U34. The sequence is that of tRNA uridine 5-carboxymethylaminomethyl modification enzyme MnmG from Cronobacter sakazakii (strain ATCC BAA-894) (Enterobacter sakazakii).